A 1028-amino-acid chain; its full sequence is MGNLESAEGVPGEPPSVPLLLPPGKMPMPEPCELEERFALVLSSMNLPPDKARLLRQYDNEKKWDLICDQERFQVKNPPHTYIQKLQSFLDPSVTRKKFRRRVQESTKVLRELEISLRTNHIGWVREFLNDENKGLDVLVDYLSFAQCSVMFDFEGLESGDDGAFDKLRSWSRSIEDLQPPSALSAPFTNSLARSARQSVLRYSTLPGRRALKNSRLVSQKDDVHVCILCLRAIMNYQYGFNLVMSHPHAVNEIALSLNNKNPRTKALVLELLAAVCLVRGGHEIILAAFDNFKEVCKELHRFEKLMEYFRNEDSNIDFMVACMQFINIVVHSVEDMNFRVHLQYEFTKLGLEEFLQKSRHTESEKLQVQIQAYLDNVFDVGGLLEDAETKNVALEKVEELEEHVSHLTEKLLDLENENMMRVAELEKQLLQREKELESIKETYENTSHQVHTLRRLIKEKEEAFQRRCHLEPNVRGLESVDSEALARVGPAELSEGMPPSDLDLLAPAPPPEEVLPLPPPPAPPLPPPPPPLPDKCPPAPPLPGAAPSVVLTVGLSAIRIKKPIKTKFRLPVFNWTALKPNQISGTVFSELDDEKILEDLDLDKFEELFKTKAQGPALDLICSKNKTAQKAASKVTLLEANRAKNLAITLRKAGRSAEEICRAIHTFDLQTLPVDFVECLMRFLPTEAEVKLLRQYERERQPLEELAAEDRFMLLFSKVERLTQRMAGMAFLGNFQDNLQMLTPQLNAIIAASASVKSSQKLKQMLEIILALGNYMNSSKRGAVYGFKLQSLDLLLDTKSTDRKMTLLHFIALTVKEKYPDLANFWHELHFVEKAAAVSLENVLLDVKELGRGMELIRRECSIHDNSVLRNFLSTNEGKLDKLQRDAKTAEEAYNAVVRYFGESPKTTPPSVFFPVFVRFIRSYKEAEQENEARKKQEEVMREKQLAQEAKKLDAKTPSQRNKWQQQELIAELRRRQAKEHRPVYEGKDGTIEDIITVLKSVPFTARTAKRGSRFFCDAAHHDESNC.

Glycine 2 is lipidated: N-myristoyl glycine. A GBD/FH3 domain is found at 26–472 (MPMPEPCELE…EAFQRRCHLE (447 aa)). Position 95 is a phosphothreonine (threonine 95). The residue at position 174 (serine 174) is a Phosphoserine. Residues 493 to 541 (ELSEGMPPSDLDLLAPAPPPEEVLPLPPPPAPPLPPPPPPLPDKCPPAP) form a disordered region. A compositionally biased stretch (pro residues) spans 508-541 (PAPPPEEVLPLPPPPAPPLPPPPPPLPDKCPPAP). The 391-residue stretch at 561-951 (IKKPIKTKFR…MREKQLAQEA (391 aa)) folds into the FH2 domain. Positions 986–1018 (YEGKDGTIEDIITVLKSVPFTARTAKRGSRFFC) constitute a DAD domain. Serine 1014 is subject to Phosphoserine.

The protein belongs to the formin homology family. In terms of assembly, interacts with SRGAP2 (via SH3 domain). Expressed in endothelial cells.

It is found in the cytoplasm. The protein resides in the cell membrane. Functionally, plays a role in the regulation of cell morphology and cytoskeletal organization. Required in the control of cell shape and migration. Required for developmental angiogenesis. In this process, required for microtubule reorganization and for efficient endothelial cell elongation. In quiescent endothelial cells, triggers rearrangement of the actin cytoskeleton, but does not alter microtubule alignement. The protein is Formin-like protein 3 (FMNL3) of Homo sapiens (Human).